A 191-amino-acid chain; its full sequence is Dirigent protein 3 (191 aa).

The first 21 residues, 1–21 (MSKLILILTAQILLLTATALA), serve as a signal peptide directing secretion. N-linked (GlcNAc...) asparagine glycans are attached at residues asparagine 96 and asparagine 131.

It belongs to the plant dirigent protein family. Homodimer.

It is found in the secreted. It localises to the extracellular space. The protein resides in the apoplast. Its function is as follows. Dirigent proteins impart stereoselectivity on the phenoxy radical-coupling reaction, yielding optically active lignans from two molecules of coniferyl alcohol in the biosynthesis of lignans, flavonolignans, and alkaloids and thus plays a central role in plant secondary metabolism. The chain is Dirigent protein 3 (DIR3) from Arabidopsis thaliana (Mouse-ear cress).